The following is a 100-amino-acid chain: Small ribosomal subunit protein bS18c (100 aa).

The tract at residues 81-100 (KQFERTESTPRTTGPRTRKK) is disordered. Low complexity predominate over residues 89 to 100 (TPRTTGPRTRKK).

This sequence belongs to the bacterial ribosomal protein bS18 family. In terms of assembly, part of the 30S ribosomal subunit.

Its subcellular location is the plastid. The protein localises to the chloroplast. The sequence is that of Small ribosomal subunit protein bS18c from Nandina domestica (Heavenly bamboo).